Consider the following 192-residue polypeptide: MQKTISHAFPLGDVTWSNQGRLSIPNAHLESWLLNTGSLTQRLQTRCNDFKVQLVSQRQELATPAEYIQLGVSKMSQQKENWQVREVILHGDNQPWVFARSIIPQALCEADFLELGDKPLGHLIFNDDRFKRQPFQLMCLQPDEAFLHEYGLPPLTEIWGRRSVFCYQQYAMMVAELFLPKAPAYRDSNFDR.

R85, L120, and E176 together coordinate substrate.

This sequence belongs to the UbiC family.

Its subcellular location is the cytoplasm. The enzyme catalyses chorismate = 4-hydroxybenzoate + pyruvate. The protein operates within cofactor biosynthesis; ubiquinone biosynthesis. Functionally, removes the pyruvyl group from chorismate, with concomitant aromatization of the ring, to provide 4-hydroxybenzoate (4HB) for the ubiquinone pathway. This is Probable chorismate pyruvate-lyase from Pseudoalteromonas atlantica (strain T6c / ATCC BAA-1087).